A 117-amino-acid chain; its full sequence is Large ribosomal subunit protein uL18 (117 aa).

The protein belongs to the universal ribosomal protein uL18 family. Part of the 50S ribosomal subunit; part of the 5S rRNA/L5/L18/L25 subcomplex. Contacts the 5S and 23S rRNAs.

Its function is as follows. This is one of the proteins that bind and probably mediate the attachment of the 5S RNA into the large ribosomal subunit, where it forms part of the central protuberance. The sequence is that of Large ribosomal subunit protein uL18 from Photorhabdus laumondii subsp. laumondii (strain DSM 15139 / CIP 105565 / TT01) (Photorhabdus luminescens subsp. laumondii).